The primary structure comprises 1222 residues: ATP-dependent helicase/nuclease subunit A (1222 aa).

A UvrD-like helicase ATP-binding domain is found at 39 to 495; the sequence is QKRTAQQIEA…ILLKENFRSQ (457 aa). 60–67 lines the ATP pocket; that stretch reads ASAGSGKT. Residues 524–810 enclose the UvrD-like helicase C-terminal domain; it reads QLIAGSHAQT…NLMTIHKSKG (287 aa).

Belongs to the helicase family. AddA subfamily. Heterodimer of AddA and AddB/RexB. It depends on Mg(2+) as a cofactor.

It catalyses the reaction Couples ATP hydrolysis with the unwinding of duplex DNA by translocating in the 3'-5' direction.. It carries out the reaction ATP + H2O = ADP + phosphate + H(+). The heterodimer acts as both an ATP-dependent DNA helicase and an ATP-dependent, dual-direction single-stranded exonuclease. Recognizes the chi site generating a DNA molecule suitable for the initiation of homologous recombination. The AddA nuclease domain is required for chi fragment generation; this subunit has the helicase and 3' -&gt; 5' nuclease activities. This is ATP-dependent helicase/nuclease subunit A from Streptococcus pyogenes serotype M49 (strain NZ131).